A 213-amino-acid polypeptide reads, in one-letter code: Penicillin-binding protein activator LpoB (213 aa).

An N-terminal signal peptide occupies residues 1–19 (MTKMSRYALITALAMFLAG). Cysteine 20 is lipidated: N-palmitoyl cysteine. A lipid anchor (S-diacylglycerol cysteine) is attached at cysteine 20. The tract at residues 28-74 (PVEEVKPAPEQPAEPQQPVPTVPSVPTIPQQPGPIEHEDQTAPPAPH) is disordered. The span at 36-50 (PEQPAEPQQPVPTVP) shows a compositional bias: pro residues.

This sequence belongs to the LpoB family. As to quaternary structure, interacts with PBP1b.

It is found in the cell outer membrane. Regulator of peptidoglycan synthesis that is essential for the function of penicillin-binding protein 1B (PBP1b). This chain is Penicillin-binding protein activator LpoB, found in Escherichia coli O157:H7.